The following is a 537-amino-acid chain: Lysosomal cobalamin transport escort protein LMBD1 (537 aa).

Residues 1 to 7 (MAAAAAE) lie on the Extracellular side of the membrane. A helical membrane pass occupies residues 8–28 (LVIGWCIFGLLLLAILAFCWV). Topologically, residues 29 to 47 (YVRKYQSQRESEVVSTVTA) are cytoplasmic. The chain crosses the membrane as a helical span at residues 48 to 68 (IFSLAVALITSALLPVDIFLV). Topologically, residues 69–97 (SYMKNQNGTFKDWADANVTVQIENTVLYG) are extracellular. Asn75 and Asn85 each carry an N-linked (GlcNAc...) asparagine glycan. The helical transmembrane segment at 98–118 (YYTLYSVILFCVFFWIPFVYF) threads the bilayer. Residues 119–141 (YYEEKDEDDASKCTQIKTALKYT) lie on the Cytoplasmic side of the membrane. The helical transmembrane segment at 142–162 (LGFVVICALLLLVGAFVPLHL) threads the bilayer. Residues 163 to 185 (PNNNNSTEWEKVKLLFEDLGTGQ) lie on the Extracellular side of the membrane. N-linked (GlcNAc...) asparagine glycosylation is found at Asn166 and Asn167. The chain crosses the membrane as a helical span at residues 186 to 206 (GLAALSFSISSLTLIGMLAAI). The Cytoplasmic segment spans residues 207 to 302 (TYTAYGMSAL…KFCGALRPLK (96 aa)). The YERL motif; mediates interaction with adapter protein complex 2 and is essential for its function in clathrin-mediated endocytosis of INSR signature appears at 229–232 (YERL). The residue at position 235 (Thr235) is a Phosphothreonine. The WTKF motif; mediates interaction with adapter protein complex 2 and is essential for its function in clathrin-mediated endocytosis of INSR motif lies at 291–294 (WTKF). The chain crosses the membrane as a helical span at residues 303–323 (IIWGIFFILVALLFVISLFLS). The Extracellular portion of the chain corresponds to 324 to 361 (NLDKALHSAGIDSGFIIFGTNLSNPLNMLLPLLQTVFP). Asn344 carries an N-linked (GlcNAc...) asparagine glycan. A helical membrane pass occupies residues 362-382 (LDYILITIIIMYFIFTSMAGI). Residues 383-405 (RNIGIWFFWIRLYKIRRGRTRPQ) are Cytoplasmic-facing. A helical transmembrane segment spans residues 406 to 426 (ALLFLCMILLLIVLHTSYMIY). Over 427-483 (SLAPQYVMYGSQNYLIESNITSDAHKGNSTLAVPKRCDADAPKDQCTVTRTYIFLHK) the chain is Extracellular. N-linked (GlcNAc...) asparagine glycans are attached at residues Asn445 and Asn454. Residues 484 to 504 (FWFFSAAYYFGNWAFLVVFLI) traverse the membrane as a helical segment. Topologically, residues 505 to 537 (GLIVSCCKGKKSVIEGVDEDSDLSDDEPSAYSA) are cytoplasmic. Ser525 and Ser528 each carry phosphoserine.

This sequence belongs to the LIMR family. LMBRD1 subfamily. Interacts with ABCD4; this interaction induces the translocation of ABCD4 from the endoplasmic reticulum to the lysosome. Interacts with ABCD4 and MMACHC; this interaction ensures the transport of cobalamin from the lysosome to the cytoplasm. Interacts with INSR, adapter protein complex 2 and clathrin heavy chain. In terms of processing, N-glycosylated.

It is found in the endoplasmic reticulum membrane. The protein resides in the lysosome membrane. Its subcellular location is the cell membrane. The protein localises to the cytoplasmic vesicle. It localises to the clathrin-coated vesicle. Its function is as follows. Lysosomal membrane chaperone required to export cobalamin (vitamin B12) from the lysosome to the cytosol, allowing its conversion to cofactors. Targets ABCD4 transporter from the endoplasmic reticulum to the lysosome. Then forms a complex with lysosomal ABCD4 and cytoplasmic MMACHC to transport cobalamin across the lysosomal membrane. Acts as an adapter protein which plays an important role in mediating and regulating the internalization of the insulin receptor (INSR). Involved in clathrin-mediated endocytosis of INSR via its interaction with adapter protein complex 2. Essential for the initiation of gastrulation and early formation of mesoderm structures during embryogenesis. The protein is Lysosomal cobalamin transport escort protein LMBD1 of Mus musculus (Mouse).